The following is a 218-amino-acid chain: MINVLLVDDHELVRAGIRRILEDIKGIKVVGEASCGEDAVKWCRTNAVDVVLMDMSMPGIGGLEATRKIARSTADVKIIMLTVHTENPLPAKVMQAGAAGYLSKGAAPQEVVSAIRSVYSGQRYIASDIAQQMALSQIEPEKTESPFASLSERELQIMLMITKGQKVNEISEQLNLSPKTVNSYRYRMFSKLNIHGDVELTHLAIRHGLCNAETLSSQ.

Residues 3 to 119 (NVLLVDDHEL…EVVSAIRSVY (117 aa)) enclose the Response regulatory domain. D54 carries the post-translational modification 4-aspartylphosphate. Positions 143–208 (TESPFASLSE…ELTHLAIRHG (66 aa)) constitute an HTH luxR-type domain. A DNA-binding region (H-T-H motif) is located at residues 167–186 (VNEISEQLNLSPKTVNSYRY).

Post-translationally, phosphorylated and activated by BarA.

The protein resides in the cytoplasm. Functionally, member of the two-component regulatory system UvrY/BarA involved in the regulation of carbon metabolism via the CsrA/CsrB regulatory system. UvrY activates the transcription of the untranslated csrB RNA and of barA, in an autoregulatory loop. Mediates the effects of CsrA on csrB RNA by BarA-dependent and BarA-independent mechanisms. The chain is Response regulator UvrY (uvrY) from Escherichia coli (strain K12).